We begin with the raw amino-acid sequence, 130 residues long: Small ribosomal subunit protein uS11 (130 aa).

Belongs to the universal ribosomal protein uS11 family. In terms of assembly, part of the 30S ribosomal subunit. Interacts with proteins S7 and S18. Binds to IF-3.

Functionally, located on the platform of the 30S subunit, it bridges several disparate RNA helices of the 16S rRNA. Forms part of the Shine-Dalgarno cleft in the 70S ribosome. This is Small ribosomal subunit protein uS11 from Moorella thermoacetica (strain ATCC 39073 / JCM 9320).